Here is a 432-residue protein sequence, read N- to C-terminus: 3-phosphoshikimate 1-carboxyvinyltransferase (432 aa).

3-phosphoshikimate is bound by residues lysine 21, serine 22, and arginine 26. A phosphoenolpyruvate-binding site is contributed by lysine 21. Residues glycine 94 and arginine 122 each coordinate phosphoenolpyruvate. Residues serine 168, glutamine 170, aspartate 317, and lysine 344 each coordinate 3-phosphoshikimate. Glutamine 170 serves as a coordination point for phosphoenolpyruvate. Aspartate 317 functions as the Proton acceptor in the catalytic mechanism. Phosphoenolpyruvate-binding residues include arginine 348 and arginine 391.

Belongs to the EPSP synthase family. Monomer.

The protein resides in the cytoplasm. It carries out the reaction 3-phosphoshikimate + phosphoenolpyruvate = 5-O-(1-carboxyvinyl)-3-phosphoshikimate + phosphate. The protein operates within metabolic intermediate biosynthesis; chorismate biosynthesis; chorismate from D-erythrose 4-phosphate and phosphoenolpyruvate: step 6/7. Functionally, catalyzes the transfer of the enolpyruvyl moiety of phosphoenolpyruvate (PEP) to the 5-hydroxyl of shikimate-3-phosphate (S3P) to produce enolpyruvyl shikimate-3-phosphate and inorganic phosphate. This is 3-phosphoshikimate 1-carboxyvinyltransferase from Petrotoga mobilis (strain DSM 10674 / SJ95).